Reading from the N-terminus, the 489-residue chain is Homoserine O-acetyltransferase (489 aa).

Residues 47–354 (NAILVCHALT…NYGHDSFLLE (308 aa)) form the AB hydrolase-1 domain. The Nucleophile role is filled by serine 152. Residue arginine 221 coordinates substrate. Residues aspartate 315 and histidine 348 contribute to the active site. Aspartate 349 contributes to the substrate binding site. 2 consecutive CBS domains span residues 375 to 434 (MIED…NLEE) and 436 to 489 (MTKN…IEEF).

This sequence belongs to the AB hydrolase superfamily. MetX family. Homodimer.

It is found in the cytoplasm. The catalysed reaction is L-homoserine + acetyl-CoA = O-acetyl-L-homoserine + CoA. It functions in the pathway amino-acid biosynthesis; L-methionine biosynthesis via de novo pathway; O-acetyl-L-homoserine from L-homoserine: step 1/1. Functionally, transfers an acetyl group from acetyl-CoA to L-homoserine, forming acetyl-L-homoserine. The protein is Homoserine O-acetyltransferase of Methanohalobium evestigatum (strain ATCC BAA-1072 / DSM 3721 / NBRC 107634 / OCM 161 / Z-7303).